The sequence spans 729 residues: MDDSTHAAEAVIATPAGNRTVRFETGRLARQAAGSAVAYLGDTMVLSATTVSKQPKEQLDFFPLTVDVEERMYAAGRIPGSFFRREGRPSEDAILTCRLIDRPLRPSFAKGLRNEIQVVATVLALDPDTLYDVVAINAASASTTLSGLPFTGPIGATRVGYVDGEWIAFPTHAELARATFDMVVAGRVVEDGSDVAIMMVEAEATPGTVELIAGGAPAPTEEVVAAGLEAAKPAIRELCRAQSELASLAGKAATREFPVFIDHHDDVLEALSAAVGDELSAALRIAGKSERENELDRVRQLAAEKVAAQFEGREKEIGAAYRALTKKLVRSRIVTEGVRIDGRSTTEIRELSAEVDYIPRVHGSALFERGETQILGVTTLAMLRMEQTVDTLNPDRTKRYMHNYNFPPYSTGETGRVGSPKRREIGHGALAERALLPVLPSREEFPYAIRQVSEALGSNGSTSMGSVCASTLSLLNAGVPLKAPVAGIAMGLVHADDAYVTLTDILGAEDAYGDMDFKVAGTRDFVTALQLDTKLDGIPASVLASALQQARGARLAILDVMAEAIGSPDEMSAHAPRVISVKIPVDKIGEVIGPKGKMINQIQADSGAEITVEDDGTIYIGAADGTSAETARSAINAIANPQMPEVGERYLGTIVKITNFGAFVSLTPGRDGLLHVSKLKTLSGGKRVEKVEDVLTVGQKLQVEITEIDARGKISLSPSAEAADAAAAS.

Residues Asp-510 and Asp-516 each contribute to the Mg(2+) site. The 60-residue stretch at 576–635 (PRVISVKIPVDKIGEVIGPKGKMINQIQADSGAEITVEDDGTIYIGAADGTSAETARSAI) folds into the KH domain. The region spanning 647 to 719 (GERYLGTIVK…ARGKISLSPS (73 aa)) is the S1 motif domain.

Belongs to the polyribonucleotide nucleotidyltransferase family. Mg(2+) is required as a cofactor.

The protein localises to the cytoplasm. The enzyme catalyses RNA(n+1) + phosphate = RNA(n) + a ribonucleoside 5'-diphosphate. Its function is as follows. Involved in mRNA degradation. Catalyzes the phosphorolysis of single-stranded polyribonucleotides processively in the 3'- to 5'-direction. The protein is Polyribonucleotide nucleotidyltransferase of Frankia alni (strain DSM 45986 / CECT 9034 / ACN14a).